We begin with the raw amino-acid sequence, 101 residues long: Citrate lyase acyl carrier protein (101 aa).

Position 14 is an O-(phosphoribosyl dephospho-coenzyme A)serine (Ser-14).

This sequence belongs to the CitD family. As to quaternary structure, oligomer with a subunit composition of (alpha,beta,gamma)6.

It localises to the cytoplasm. Functionally, covalent carrier of the coenzyme of citrate lyase. This is Citrate lyase acyl carrier protein from Streptococcus uberis (strain ATCC BAA-854 / 0140J).